The primary structure comprises 399 residues: Transcription factor UNE10 (399 aa).

Disordered regions lie at residues 119–158 (QSKP…GSQR) and 173–228 (MGSH…RRDK). The span at 178-201 (NTIDDHDSVCHSRPQMEDEEEKKA) shows a compositional bias: basic and acidic residues. In terms of domain architecture, bHLH spans 213 to 262 (RAAAIHNQSERKRRDKINQRMKTLQKLVPNSSKTDKASMLDEVIEYLKQL).

Homodimer. Associates to PTAC12/HMR/PAP5 which acts as a transcriptional coactivator. Interacts with the Pfr form of phyB but barely with that of phyA. Binds to COP1. In terms of processing, ubiquitinated and subsequently targeted to protein degradation by COP1 in the dark, but not in far-red light. In terms of tissue distribution, mainly expressed in stems, leaves, seedlings, fruits and flowers, and, to a lower extent, in roots.

The protein localises to the nucleus. Its activity is regulated as follows. Stabilized by phyA but destabilized by phyB. Accumulates in the dark but not in far-red light upon MG132 treatment, a 26S proteasome inhibitor (at protein level). Transcription factor binding to G-box elements (5'-CACGTG-3') in target genes promoters, particularly in far-red light but barely in the dark. Required during the fertilization of ovules by pollen. Repressor of phytochrome A-mediated far-red light responses including seed germination, suppression of hypocotyl elongation, and randomization of hypocotyl growth orientation. Does not inhibit phyB-induced red light responses. This is Transcription factor UNE10 from Arabidopsis thaliana (Mouse-ear cress).